The following is a 262-amino-acid chain: Trypsin theta (262 aa).

A signal peptide spans 1 to 19; the sequence is MHGLVVLLVCLAVGSAFAG. The propeptide at 20–34 is activation peptide; that stretch reads TIGVSNADPFEREGR. One can recognise a Peptidase S1 domain in the interval 35 to 260; it reads IVGGEDTTIR…LRKWILNASQ (226 aa). C61 and C77 form a disulfide bridge. Active-site charge relay system residues include H76 and D121. Intrachain disulfides connect C186–C203 and C212–C236. Catalysis depends on S216, which acts as the Charge relay system.

It belongs to the peptidase S1 family.

Its subcellular location is the secreted. The protein localises to the extracellular space. The catalysed reaction is Preferential cleavage: Arg-|-Xaa, Lys-|-Xaa.. This is Trypsin theta (thetaTry) from Drosophila erecta (Fruit fly).